Consider the following 156-residue polypeptide: MSINATLFVQAIVFLILVWFTMQFVWPPIAKALDERAQKIADGLAAADRAKSELSAANQRVEKELSQARNETAARLADAERRAQAIIEEAKARATEEGNKLVAAARAEAEQQMVQAREALRAQVAVLAVKGAEQILRKEVDAGVHAGLLRRLQTEL.

Residues 7-27 form a helical membrane-spanning segment; it reads LFVQAIVFLILVWFTMQFVWP.

It belongs to the ATPase B chain family. In terms of assembly, F-type ATPases have 2 components, F(1) - the catalytic core - and F(0) - the membrane proton channel. F(1) has five subunits: alpha(3), beta(3), gamma(1), delta(1), epsilon(1). F(0) has three main subunits: a(1), b(2) and c(10-14). The alpha and beta chains form an alternating ring which encloses part of the gamma chain. F(1) is attached to F(0) by a central stalk formed by the gamma and epsilon chains, while a peripheral stalk is formed by the delta and b chains.

The protein localises to the cell inner membrane. In terms of biological role, f(1)F(0) ATP synthase produces ATP from ADP in the presence of a proton or sodium gradient. F-type ATPases consist of two structural domains, F(1) containing the extramembraneous catalytic core and F(0) containing the membrane proton channel, linked together by a central stalk and a peripheral stalk. During catalysis, ATP synthesis in the catalytic domain of F(1) is coupled via a rotary mechanism of the central stalk subunits to proton translocation. Component of the F(0) channel, it forms part of the peripheral stalk, linking F(1) to F(0). This Verminephrobacter eiseniae (strain EF01-2) protein is ATP synthase subunit b.